The sequence spans 308 residues: Porphobilinogen deaminase (308 aa).

S-(dipyrrolylmethanemethyl)cysteine is present on cysteine 240.

This sequence belongs to the HMBS family. In terms of assembly, monomer. Dipyrromethane serves as cofactor.

It carries out the reaction 4 porphobilinogen + H2O = hydroxymethylbilane + 4 NH4(+). Its pathway is porphyrin-containing compound metabolism; protoporphyrin-IX biosynthesis; coproporphyrinogen-III from 5-aminolevulinate: step 2/4. Tetrapolymerization of the monopyrrole PBG into the hydroxymethylbilane pre-uroporphyrinogen in several discrete steps. The chain is Porphobilinogen deaminase from Desulfitobacterium hafniense (strain DSM 10664 / DCB-2).